Reading from the N-terminus, the 846-residue chain is MSYTLDSLGNPSAYRRVPTETRSSFSRVSGSPSSGFRSQSWSRGSPSTVSSSYKRSALAPRLAYSSAMLSSAESSLDFSQSSSLLNGGSGGDYKLSRSNEKEQLQGLNDRFAGYIEKVHYLEQQNKEIEAEIHALRQKQASHAQLGDAYDQEIRELRATLEMVNHEKAQVQLDSDHLEEDIHRLKERFEEEARLRDDTEAAIRAVRKDIEESSMVKVELDKKVQSLQDEVAFLRSNHEEEVADLLAQIQASHITVERKDYLKTDISTALKEIRSQLECHSDQNMHQAEEWFKCRYAKLTEAAEQNKEAIRSAKEEIAEYRRQLQSKSIELESVRGTKESLERQLSDIEERHNHDLSSYQDTIQQLENELRGTKWEMARHLREYQDLLNVKMALDIEIAAYRKLLEGEETRFSTFSGSITGPLYTHRQPSVTISSKIQKTKVEAPKLKVQHKFVEEIIEETKVEDEKSEMEDALTVIAEELAASAKEEKEEAEEKEEEPEVEKSPVKSPEAKEEEEGEKEEEEEGQEEEEEEDEGVKSDQAEEGGSEKEGSSEKDEGEQEEEGETEAEGEGEEAEAKEEKKTEGKVEEMAIKEEIKVEKPEKAKSPVPKSPVEEVKPKPEAKAGKDEQKEEEKVEEKKEVAKESPKEEKVEKKEEKPKDVPDKKKAESPVKEKAVEEMITITKSVKVSLEKDTKEEKPQQQEKVKEKAEEEGGSEEEVGDKSPQESKKEDIAINGEVEGKEEEEQETQEKGSGQEEEKGVVTNGLDVSPAEEKKGEDRSDDKVVVTKKVEKITSEGGDGATKYITKSVTVTQKVEEHEETFEEKLVSTKKVEKVTSHAIVKEVTQGD.

Positions 1–10 (MSYTLDSLGN) are enriched in polar residues. The disordered stretch occupies residues 1-52 (MSYTLDSLGNPSAYRRVPTETRSSFSRVSGSPSSGFRSQSWSRGSPSTVSSS). The residue at position 2 (Ser2) is an N-acetylserine. A head region spans residues 2–104 (SYTLDSLGNP…LSRSNEKEQL (103 aa)). Positions 22 to 45 (RSSFSRVSGSPSSGFRSQSWSRGS) are enriched in low complexity. Ser31 carries the post-translational modification Phosphoserine. At Arg43 the chain carries Omega-N-methylarginine. An O-linked (GlcNAc) threonine glycan is attached at Thr48. Ser98 is subject to Phosphoserine. One can recognise an IF rod domain in the interval 100–411 (EKEQLQGLND…KLLEGEETRF (312 aa)). Residues 104–135 (LQGLNDRFAGYIEKVHYLEQQNKEIEAEIHAL) form a coil 1A region. The tract at residues 136–148 (RQKQASHAQLGDA) is linker 1. Residues 149–247 (YDQEIRELRA…EEEVADLLAQ (99 aa)) form a coil 1B region. Phosphoserine is present on Ser225. The interval 248 to 264 (IQASHITVERKDYLKTD) is linker 12. Positions 265 to 286 (ISTALKEIRSQLECHSDQNMHQ) are coil 2A. The tract at residues 287-290 (AEEW) is linker 2. Positions 291–411 (FKCRYAKLTE…KLLEGEETRF (121 aa)) are coil 2B. Tyr319 is modified (phosphotyrosine). Phosphoserine is present on residues Ser345, Ser417, and Ser429. The tract at residues 412 to 845 (STFSGSITGP…HAIVKEVTQG (434 aa)) is tail. A glycan (O-linked (GlcNAc) threonine) is linked at Thr431. Ser467 and Ser483 each carry phosphoserine. The segment at 483-783 (SAKEEKEEAE…GEDRSDDKVV (301 aa)) is disordered. Residues 489–499 (EEAEEKEEEPE) are compositionally biased toward acidic residues. Residues 500–510 (VEKSPVKSPEA) are compositionally biased toward basic and acidic residues. Ser503 and Ser507 each carry phosphoserine. The segment covering 511-533 (KEEEEGEKEEEEEGQEEEEEEDE) has biased composition (acidic residues). Positions 534–553 (GVKSDQAEEGGSEKEGSSEK) are enriched in basic and acidic residues. 4 positions are modified to phosphoserine: Ser537, Ser545, Ser550, and Ser551. Residues 554-575 (DEGEQEEEGETEAEGEGEEAEA) are compositionally biased toward acidic residues. Phosphothreonine is present on Thr564. Over residues 576–603 (KEEKKTEGKVEEMAIKEEIKVEKPEKAK) the composition is skewed to basic and acidic residues. Ser604, Ser609, Ser643, Ser667, Ser687, Ser713, Ser721, Ser751, and Ser767 each carry phosphoserine. Composition is skewed to basic and acidic residues over residues 610-675 (PVEE…KAVE) and 687-709 (SLEK…KAEE). Basic and acidic residues-rich tracts occupy residues 718–730 (GDKS…KEDI) and 746–758 (TQEK…EEKG). Positions 769-783 (AEEKKGEDRSDDKVV) are enriched in basic and acidic residues.

It belongs to the intermediate filament family. In terms of assembly, forms heterodimers with NEFL; which can further hetero-oligomerize (in vitro). Forms heterodimers with INA (in vitro). In terms of processing, there are a number of repeats of the tripeptide K-S-P, NFM is phosphorylated on a number of the serines in this motif. It is thought that phosphorylation of NFM results in the formation of interfilament cross bridges that are important in the maintenance of axonal caliber. Post-translationally, phosphorylation seems to play a major role in the functioning of the larger neurofilament polypeptides (NF-M and NF-H), the levels of phosphorylation being altered developmentally and coincidentally with a change in the neurofilament function. Phosphorylated in the head and rod regions by the PKC kinase PKN1, leading to the inhibition of polymerization. As to expression, expressed in the dorsal root ganglion neurons (at protein level).

The protein localises to the cytoplasm. The protein resides in the cytoskeleton. Its subcellular location is the cell projection. It localises to the axon. In terms of biological role, neurofilaments usually contain three intermediate filament proteins: NEFL, NEFM, and NEFH which are involved in the maintenance of neuronal caliber. May additionally cooperate with the neuronal intermediate filament proteins PRPH and INA to form neuronal filamentous networks. This chain is Neurofilament medium polypeptide (Nefm), found in Rattus norvegicus (Rat).